Reading from the N-terminus, the 249-residue chain is Vitamin B12 import ATP-binding protein BtuD (249 aa).

Residues 1–233 enclose the ABC transporter domain; the sequence is MSIVMQLQDV…PNLAQAYGMN (233 aa). Residue 33–40 participates in ATP binding; the sequence is GPNGAGKS.

The protein belongs to the ABC transporter superfamily. Vitamin B12 importer (TC 3.A.1.13.1) family. The complex is composed of two ATP-binding proteins (BtuD), two transmembrane proteins (BtuC) and a solute-binding protein (BtuF).

The protein localises to the cell inner membrane. The catalysed reaction is an R-cob(III)alamin(out) + ATP + H2O = an R-cob(III)alamin(in) + ADP + phosphate + H(+). In terms of biological role, part of the ABC transporter complex BtuCDF involved in vitamin B12 import. Responsible for energy coupling to the transport system. The sequence is that of Vitamin B12 import ATP-binding protein BtuD from Escherichia coli (strain K12 / DH10B).